Reading from the N-terminus, the 747-residue chain is Polyribonucleotide nucleotidyltransferase (747 aa).

Mg(2+) contacts are provided by Asp487 and Asp493. The KH domain occupies 554–613 (PSTTTIKIDKDKIRDIIGPGGKIIKEICETSGAKIDISDDGTVSVYAADRDKLKIASDKI). An S1 motif domain is found at 623 to 691 (GEIFNGTVTK…NKGKAKLTIK (69 aa)). A disordered region spans residues 694-716 (DKDKSLNNPKPQNSINNAKENSE). The segment covering 699–712 (LNNPKPQNSINNAK) has biased composition (polar residues).

This sequence belongs to the polyribonucleotide nucleotidyltransferase family. The cofactor is Mg(2+).

The protein localises to the cytoplasm. The catalysed reaction is RNA(n+1) + phosphate = RNA(n) + a ribonucleoside 5'-diphosphate. Its function is as follows. Involved in mRNA degradation. Catalyzes the phosphorolysis of single-stranded polyribonucleotides processively in the 3'- to 5'-direction. The sequence is that of Polyribonucleotide nucleotidyltransferase from Rickettsia canadensis (strain McKiel).